A 95-amino-acid polypeptide reads, in one-letter code: Small ribosomal subunit protein uS19 (95 aa).

This sequence belongs to the universal ribosomal protein uS19 family.

In terms of biological role, protein S19 forms a complex with S13 that binds strongly to the 16S ribosomal RNA. The protein is Small ribosomal subunit protein uS19 of Thermotoga sp. (strain RQ2).